Consider the following 396-residue polypeptide: Cell division protein FtsZ 1 (396 aa).

The segment at 1 to 38 is disordered; it reads MDSIVQDAIDEAEESEDSASEPADVAGGGGDTVPTGTM. Acidic residues predominate over residues 8 to 19; it reads AIDEAEESEDSA. Residues 61 to 65, 148 to 150, E179, R183, and D226 contribute to the GTP site; these read GAGSN and GTG. A disordered region spans residues 358–396; sequence QIYGRNEAAEGDGPAQESTPEPEPEPQAGSEIEDIDYVE.

Belongs to the FtsZ family. Homodimer. Polymerizes to form a dynamic ring structure in a strictly GTP-dependent manner. Interacts directly with several other division proteins.

Its subcellular location is the cytoplasm. Its function is as follows. Essential cell division protein that forms a contractile ring structure (Z ring) at the future cell division site. The regulation of the ring assembly controls the timing and the location of cell division. One of the functions of the FtsZ ring is to recruit other cell division proteins to the septum to produce a new cell wall between the dividing cells. Binds GTP and shows GTPase activity. The sequence is that of Cell division protein FtsZ 1 from Halobacterium salinarum (strain ATCC 29341 / DSM 671 / R1).